The sequence spans 590 residues: Complement component C8 beta chain (590 aa).

The first 32 residues, 1–32, serve as a signal peptide directing secretion; sequence MKKSWTWTWRVPAELLLLCAALGCLCVPGSRS. The propeptide occupies 33–54; that stretch reads ERPRSLEPTVVNRSLAKSRHSR. Residue asparagine 44 is glycosylated (N-linked (GlcNAc...) asparagine). The region spanning 64–117 is the TSP type-1 1 domain; sequence DCELSSWSSWTMCDPCQKKRYRHAYLLRPSQFNGEPCNFSDKEVEDCATSRPCR. 7 cysteine pairs are disulfide-bonded: cysteine 65-cysteine 100, cysteine 76-cysteine 110, cysteine 79-cysteine 116, cysteine 122-cysteine 133, cysteine 127-cysteine 146, cysteine 140-cysteine 155, and cysteine 162-cysteine 200. Tryptophan 70 and tryptophan 73 each carry a C-linked (Man) tryptophan glycan. A glycan (N-linked (GlcNAc...) asparagine) is linked at asparagine 101. The 38-residue stretch at 120-157 folds into the LDL-receptor class A domain; that stretch reads VRCEGFVCAQTGRCVNRRLLCNGDNDCGDQSDEANCRK. The Ca(2+) site is built by leucine 138, asparagine 141, aspartate 143, aspartate 145, aspartate 151, and glutamate 152. One can recognise an MACPF domain in the interval 158-504; it reads IYKKCHHEME…EFQGEVSPCR (347 aa). 4 consecutive transmembrane segments (beta stranded) span residues 252 to 259, 262 to 269, 379 to 386, and 392 to 399; these read STFNLGFK, SIFEFGIN, AKNDFKLG, and VYVSLGVS. A disulfide bridge links cysteine 378 with cysteine 403. Threonine 418 carries the post-translational modification Phosphothreonine. 4 cysteine pairs are disulfide-bonded: cysteine 503/cysteine 550, cysteine 505/cysteine 521, cysteine 508/cysteine 523, and cysteine 525/cysteine 534. Residues 505 to 535 form the EGF-like domain; it reads CAPCQGNGVPVQKGSRCDCICPVGFQGSACE. In terms of domain architecture, TSP type-1 2 spans 545-588; the sequence is DGRWSCWSRWSSCSGGQKTRRRQCNNPAPQDGGSPCSGPASETL. Tryptophan 551 and tryptophan 554 each carry a C-linked (Man) tryptophan glycan. Cysteines 557 and 590 form a disulfide. A disordered region spans residues 557 to 590; that stretch reads CSGGQKTRRRQCNNPAPQDGGSPCSGPASETLAC.

The protein belongs to the complement C6/C7/C8/C9 family. In terms of assembly, heterotrimer of 3 chains: alpha (C8A), beta (C8B) and gamma (C8G); the alpha and gamma chains are disulfide bonded. Component of the membrane attack complex (MAC), composed of complement C5b, C6, C7, C8A, C8B, C8G and multiple copies of the pore-forming subunit C9. N-glycosylated; contains one or two bound glycans. Not O-glycosylated.

The protein localises to the secreted. It localises to the target cell membrane. With respect to regulation, membrane attack complex (MAC) assembly is inhibited by CD59, thereby protecting self-cells from damage during complement activation. CD59 acts by binding to the beta-haipins of C8 (C8A and C8B), forming an intermolecular beta-sheet that prevents incorporation of the multiple copies of C9 required for complete formation of the osmolytic pore. MAC assembly is also inhibited by clusterin (CLU) chaperones that inhibit polymerization of C9. In terms of biological role, component of the membrane attack complex (MAC), a multiprotein complex activated by the complement cascade, which inserts into a target cell membrane and forms a pore, leading to target cell membrane rupture and cell lysis. The MAC is initiated by proteolytic cleavage of C5 into complement C5b in response to the classical, alternative, lectin and GZMK complement pathways. The complement pathways consist in a cascade of proteins that leads to phagocytosis and breakdown of pathogens and signaling that strengthens the adaptive immune system. C8B, together with C8A and C8G, inserts into the target membrane, but does not form pores by itself. During MAC assembly, associates with C5b, C6 and C7 to form the C5b8 intermediate complex that inserts into the target membrane and traverses the bilayer increasing membrane rigidity. This chain is Complement component C8 beta chain (C8B), found in Oryctolagus cuniculus (Rabbit).